Reading from the N-terminus, the 104-residue chain is uncharacterized protein (104 aa).

Residues alanine 42–arginine 104 adopt a coiled-coil conformation.

Belongs to the WXG100 family.

This is an uncharacterized protein from Bacillus subtilis (strain 168).